An 86-amino-acid polypeptide reads, in one-letter code: Curamycin polyketide synthase acyl carrier protein (86 aa).

Positions 7-86 constitute a Carrier domain; it reads QVTVEELATL…VVNGALASGA (80 aa). Ser-44 is subject to O-(pantetheine 4'-phosphoryl)serine.

4'-phosphopantetheine is transferred from CoA to a specific serine of the apo-ACP-like protein.

The protein operates within antibiotic biosynthesis; curamycin biosynthesis. Its function is as follows. Acyl carrier protein. In Streptomyces cyaneus (Streptomyces curacoi), this protein is Curamycin polyketide synthase acyl carrier protein (curE).